We begin with the raw amino-acid sequence, 119 residues long: Small ribosomal subunit protein uS13 (119 aa).

Positions 92–110 are enriched in basic residues; that stretch reads RKDTCKRSTKKNARTRKGP. Positions 92–119 are disordered; the sequence is RKDTCKRSTKKNARTRKGPKKDNRWKER.

Belongs to the universal ribosomal protein uS13 family. Part of the 30S ribosomal subunit. Forms a loose heterodimer with protein S19. Forms two bridges to the 50S subunit in the 70S ribosome.

Functionally, located at the top of the head of the 30S subunit, it contacts several helices of the 16S rRNA. In the 70S ribosome it contacts the 23S rRNA (bridge B1a) and protein L5 of the 50S subunit (bridge B1b), connecting the 2 subunits; these bridges are implicated in subunit movement. Contacts the tRNAs in the A and P-sites. This chain is Small ribosomal subunit protein uS13, found in Mycoplasma sp.